The following is an 86-amino-acid chain: YcgL domain-containing protein XCC3997 (86 aa).

Positions 1 to 83 constitute a YcgL domain; that stretch reads MHAYVYKSQR…PKTVVLAGEC (83 aa).

In Xanthomonas campestris pv. campestris (strain ATCC 33913 / DSM 3586 / NCPPB 528 / LMG 568 / P 25), this protein is YcgL domain-containing protein XCC3997.